The following is a 165-amino-acid chain: Phosphopantetheine adenylyltransferase (165 aa).

Residue S9 participates in substrate binding. Residues 9–10 (SF) and H17 each bind ATP. 3 residues coordinate substrate: K41, V73, and R87. ATP is bound by residues 88 to 90 (GLR), E98, and 123 to 129 (FTLLSSS).

Belongs to the bacterial CoaD family. In terms of assembly, homohexamer. Mg(2+) is required as a cofactor.

It localises to the cytoplasm. It carries out the reaction (R)-4'-phosphopantetheine + ATP + H(+) = 3'-dephospho-CoA + diphosphate. It functions in the pathway cofactor biosynthesis; coenzyme A biosynthesis; CoA from (R)-pantothenate: step 4/5. In terms of biological role, reversibly transfers an adenylyl group from ATP to 4'-phosphopantetheine, yielding dephospho-CoA (dPCoA) and pyrophosphate. This is Phosphopantetheine adenylyltransferase from Herpetosiphon aurantiacus (strain ATCC 23779 / DSM 785 / 114-95).